The sequence spans 875 residues: Alanine--tRNA ligase (875 aa).

Positions 565, 569, 666, and 670 each coordinate Zn(2+).

Belongs to the class-II aminoacyl-tRNA synthetase family. It depends on Zn(2+) as a cofactor.

Its subcellular location is the cytoplasm. The catalysed reaction is tRNA(Ala) + L-alanine + ATP = L-alanyl-tRNA(Ala) + AMP + diphosphate. In terms of biological role, catalyzes the attachment of alanine to tRNA(Ala) in a two-step reaction: alanine is first activated by ATP to form Ala-AMP and then transferred to the acceptor end of tRNA(Ala). Also edits incorrectly charged Ser-tRNA(Ala) and Gly-tRNA(Ala) via its editing domain. This chain is Alanine--tRNA ligase, found in Methylibium petroleiphilum (strain ATCC BAA-1232 / LMG 22953 / PM1).